A 310-amino-acid polypeptide reads, in one-letter code: tRNA-cytidine(32) 2-sulfurtransferase (310 aa).

The PP-loop motif signature appears at S45 to S50. Positions 120, 123, and 211 each coordinate [4Fe-4S] cluster.

Belongs to the TtcA family. As to quaternary structure, homodimer. The cofactor is Mg(2+). It depends on [4Fe-4S] cluster as a cofactor.

Its subcellular location is the cytoplasm. The enzyme catalyses cytidine(32) in tRNA + S-sulfanyl-L-cysteinyl-[cysteine desulfurase] + AH2 + ATP = 2-thiocytidine(32) in tRNA + L-cysteinyl-[cysteine desulfurase] + A + AMP + diphosphate + H(+). Its pathway is tRNA modification. In terms of biological role, catalyzes the ATP-dependent 2-thiolation of cytidine in position 32 of tRNA, to form 2-thiocytidine (s(2)C32). The sulfur atoms are provided by the cysteine/cysteine desulfurase (IscS) system. The sequence is that of tRNA-cytidine(32) 2-sulfurtransferase from Shewanella baltica (strain OS155 / ATCC BAA-1091).